The chain runs to 497 residues: Glycerol kinase (497 aa).

Threonine 13 provides a ligand contact to ADP. ATP-binding residues include threonine 13, threonine 14, and serine 15. Residue threonine 13 coordinates sn-glycerol 3-phosphate. An ADP-binding site is contributed by arginine 17. Residues arginine 83, glutamate 84, and tyrosine 135 each contribute to the sn-glycerol 3-phosphate site. Glycerol is bound by residues arginine 83, glutamate 84, and tyrosine 135. Phosphohistidine; by HPr is present on histidine 231. Aspartate 245 contacts sn-glycerol 3-phosphate. The glycerol site is built by aspartate 245 and glutamine 246. Residues threonine 267 and glycine 310 each contribute to the ADP site. Residues threonine 267, glycine 310, glutamine 314, and glycine 411 each contribute to the ATP site. ADP contacts are provided by glycine 411 and asparagine 415.

This sequence belongs to the FGGY kinase family. In terms of assembly, homotetramer and homodimer (in equilibrium). Post-translationally, the phosphoenolpyruvate-dependent sugar phosphotransferase system (PTS), including enzyme I, and histidine-containing protein (HPr) are required for the phosphorylation, which leads to the activation of the enzyme.

The catalysed reaction is glycerol + ATP = sn-glycerol 3-phosphate + ADP + H(+). The protein operates within polyol metabolism; glycerol degradation via glycerol kinase pathway; sn-glycerol 3-phosphate from glycerol: step 1/1. With respect to regulation, activated by phosphorylation and inhibited by fructose 1,6-bisphosphate (FBP). Its function is as follows. Key enzyme in the regulation of glycerol uptake and metabolism. Catalyzes the phosphorylation of glycerol to yield sn-glycerol 3-phosphate. This Halalkalibacterium halodurans (strain ATCC BAA-125 / DSM 18197 / FERM 7344 / JCM 9153 / C-125) (Bacillus halodurans) protein is Glycerol kinase.